A 404-amino-acid polypeptide reads, in one-letter code: Argininosuccinate synthase (404 aa).

ATP is bound by residues 12-20 and alanine 40; that span reads AYSGGLDTS. The L-citrulline site is built by tyrosine 92 and serine 97. Position 122 (glycine 122) interacts with ATP. Positions 124, 128, and 129 each coordinate L-aspartate. Asparagine 128 lines the L-citrulline pocket. The L-citrulline site is built by arginine 132, serine 181, serine 190, glutamate 266, and tyrosine 278.

The protein belongs to the argininosuccinate synthase family. Type 1 subfamily. As to quaternary structure, homotetramer.

Its subcellular location is the cytoplasm. The enzyme catalyses L-citrulline + L-aspartate + ATP = 2-(N(omega)-L-arginino)succinate + AMP + diphosphate + H(+). It functions in the pathway amino-acid biosynthesis; L-arginine biosynthesis; L-arginine from L-ornithine and carbamoyl phosphate: step 2/3. In Erwinia tasmaniensis (strain DSM 17950 / CFBP 7177 / CIP 109463 / NCPPB 4357 / Et1/99), this protein is Argininosuccinate synthase.